A 180-amino-acid polypeptide reads, in one-letter code: Adenine phosphoribosyltransferase (180 aa).

It belongs to the purine/pyrimidine phosphoribosyltransferase family. As to quaternary structure, homodimer.

The protein localises to the cytoplasm. The enzyme catalyses AMP + diphosphate = 5-phospho-alpha-D-ribose 1-diphosphate + adenine. It functions in the pathway purine metabolism; AMP biosynthesis via salvage pathway; AMP from adenine: step 1/1. Its function is as follows. Catalyzes a salvage reaction resulting in the formation of AMP, that is energically less costly than de novo synthesis. The polypeptide is Adenine phosphoribosyltransferase (Actinobacillus succinogenes (strain ATCC 55618 / DSM 22257 / CCUG 43843 / 130Z)).